A 717-amino-acid chain; its full sequence is Ribosomal RNA large subunit methyltransferase K/L (717 aa).

One can recognise a THUMP domain in the interval 43–154; sequence IGYKACLWSR…KGKANITLDL (112 aa).

Belongs to the methyltransferase superfamily. RlmKL family.

The protein resides in the cytoplasm. The enzyme catalyses guanosine(2445) in 23S rRNA + S-adenosyl-L-methionine = N(2)-methylguanosine(2445) in 23S rRNA + S-adenosyl-L-homocysteine + H(+). It catalyses the reaction guanosine(2069) in 23S rRNA + S-adenosyl-L-methionine = N(2)-methylguanosine(2069) in 23S rRNA + S-adenosyl-L-homocysteine + H(+). Its function is as follows. Specifically methylates the guanine in position 2445 (m2G2445) and the guanine in position 2069 (m7G2069) of 23S rRNA. This chain is Ribosomal RNA large subunit methyltransferase K/L, found in Aeromonas hydrophila subsp. hydrophila (strain ATCC 7966 / DSM 30187 / BCRC 13018 / CCUG 14551 / JCM 1027 / KCTC 2358 / NCIMB 9240 / NCTC 8049).